The following is a 167-amino-acid chain: Small ribosomal subunit protein uS7c (167 aa).

Belongs to the universal ribosomal protein uS7 family. Part of the 30S ribosomal subunit.

The protein resides in the plastid. It localises to the chloroplast. Its function is as follows. One of the primary rRNA binding proteins, it binds directly to 16S rRNA where it nucleates assembly of the head domain of the 30S subunit. The sequence is that of Small ribosomal subunit protein uS7c (rps7) from Tetradesmus obliquus (Green alga).